The following is a 1139-amino-acid chain: Integrin alpha ina-1 (1139 aa).

An N-terminal signal peptide occupies residues 1 to 19 (MRECIISWTLLLCLSCVKS). Topologically, residues 20 to 1084 (FNLDVNAPIY…PTIGDSRPIP (1065 aa)) are extracellular. An FG-GAP 1 repeat occupies 21-85 (NLDVNAPIYR…CDINTFYNGG (65 aa)). Asparagine 108 and asparagine 136 each carry an N-linked (GlcNAc...) asparagine glycan. FG-GAP repeat units lie at residues 111 to 171 (RGRT…LQST), 180 to 231 (LPTT…IFDS), 242 to 302 (NGDM…SSSK), 307 to 370 (EDKF…QRKQ), 378 to 438 (HPPK…IEKF), and 448 to 510 (GNDL…MEKR). An N-linked (GlcNAc...) asparagine glycan is attached at asparagine 313. Asparagine 580, asparagine 788, asparagine 851, and asparagine 1026 each carry an N-linked (GlcNAc...) asparagine glycan. The helical transmembrane segment at 1085-1106 (WWIYVIAAVIGVLILSLIIICL) threads the bilayer. Residues 1107–1139 (SKCGFFKRNRLDQPSLYTAQLKHEREEWADTGL) are Cytoplasmic-facing.

This sequence belongs to the integrin alpha chain family. Heterodimer of an alpha and a beta subunit. Alpha ina-1 associates with beta pat-3. Interacts (via cytoplasmic domain) with src-1 (when phosphorylated at 'Tyr-416').

It localises to the membrane. The protein localises to the cell projection. It is found in the phagocytic cup. Its subcellular location is the cytoplasmic vesicle. The protein resides in the phagosome membrane. Its function is as follows. Plays a role in cell migration, axon fasciculation, and morphogenesis. During gonad morphogenesis, involved in distal tip cell (DTC)-mediated guidance of gonad elongation, in maintaining their sharp tapering morphology and in their migration. Involved in the anterior-posterior positioning of QR neuroblast descendants by regulating the migratory speed of QR.p. Probably by acting as a receptor for apoptotic cells, plays a role in the clearance of apoptotic cells during mid-embryogenesis. This is Integrin alpha ina-1 (ina-1) from Caenorhabditis elegans.